Reading from the N-terminus, the 88-residue chain is Sec-independent protein translocase protein TatA (88 aa).

A helical membrane pass occupies residues 1 to 21 (MGGISIWQLLIIALIVVLLFG). The segment at 43–88 (MSSEEDKKALEDAEAAKPVQTAQTVQSAQPTQQATEKKPESNKEQA) is disordered. Over residues 46–57 (EEDKKALEDAEA) the composition is skewed to basic and acidic residues. The segment covering 62 to 76 (QTAQTVQSAQPTQQA) has biased composition (polar residues). Over residues 77-88 (TEKKPESNKEQA) the composition is skewed to basic and acidic residues.

It belongs to the TatA/E family. The Tat system comprises two distinct complexes: a TatABC complex, containing multiple copies of TatA, TatB and TatC subunits, and a separate TatA complex, containing only TatA subunits. Substrates initially bind to the TatABC complex, which probably triggers association of the separate TatA complex to form the active translocon.

The protein localises to the cell inner membrane. Functionally, part of the twin-arginine translocation (Tat) system that transports large folded proteins containing a characteristic twin-arginine motif in their signal peptide across membranes. TatA could form the protein-conducting channel of the Tat system. In Shewanella oneidensis (strain ATCC 700550 / JCM 31522 / CIP 106686 / LMG 19005 / NCIMB 14063 / MR-1), this protein is Sec-independent protein translocase protein TatA.